A 256-amino-acid polypeptide reads, in one-letter code: Deoxyribose-phosphate aldolase (256 aa).

Residue Asp-102 is the Proton donor/acceptor of the active site. Lys-165 (schiff-base intermediate with acetaldehyde) is an active-site residue. The active-site Proton donor/acceptor is the Lys-197.

It belongs to the DeoC/FbaB aldolase family. DeoC type 2 subfamily.

The protein resides in the cytoplasm. The catalysed reaction is 2-deoxy-D-ribose 5-phosphate = D-glyceraldehyde 3-phosphate + acetaldehyde. It participates in carbohydrate degradation; 2-deoxy-D-ribose 1-phosphate degradation; D-glyceraldehyde 3-phosphate and acetaldehyde from 2-deoxy-alpha-D-ribose 1-phosphate: step 2/2. Functionally, catalyzes a reversible aldol reaction between acetaldehyde and D-glyceraldehyde 3-phosphate to generate 2-deoxy-D-ribose 5-phosphate. This Shewanella sp. (strain W3-18-1) protein is Deoxyribose-phosphate aldolase.